The primary structure comprises 186 residues: NADH-dependent FMN reductase SfnF (186 aa).

Belongs to the SsuE family.

It carries out the reaction FMNH2 + NAD(+) = FMN + NADH + 2 H(+). Its function is as follows. Involved in the dimethyl sulfide degradation pathway. Catalyzes the NADH-dependent reduction of FMN. The chain is NADH-dependent FMN reductase SfnF from Pseudomonas putida (Arthrobacter siderocapsulatus).